Consider the following 397-residue polypeptide: uncharacterized protein (397 aa).

Transmembrane regions (helical) follow at residues 62–79, 92–109, 135–154, and 167–189; these read VLLF…LIAI, WYGL…LVVT, VVFL…STLS, and AFLK…FPGI.

The protein localises to the cell membrane. This is an uncharacterized protein from Archaeoglobus fulgidus (strain ATCC 49558 / DSM 4304 / JCM 9628 / NBRC 100126 / VC-16).